A 95-amino-acid polypeptide reads, in one-letter code: uncharacterized protein (95 aa).

Positions 46–68 (GDRGTNGRTEAEHDGIPHSRKKV) are disordered.

This is an uncharacterized protein from Schizosaccharomyces pombe (strain 972 / ATCC 24843) (Fission yeast).